Here is a 312-residue protein sequence, read N- to C-terminus: Aspartate carbamoyltransferase catalytic subunit (312 aa).

Carbamoyl phosphate-binding residues include Arg-55 and Thr-56. Lys-83 is an L-aspartate binding site. 3 residues coordinate carbamoyl phosphate: Arg-105, His-133, and Gln-136. The L-aspartate site is built by Arg-166 and Arg-220. Residues Gly-261 and Pro-262 each contribute to the carbamoyl phosphate site.

The protein belongs to the aspartate/ornithine carbamoyltransferase superfamily. ATCase family. Heterododecamer (2C3:3R2) of six catalytic PyrB chains organized as two trimers (C3), and six regulatory PyrI chains organized as three dimers (R2).

It carries out the reaction carbamoyl phosphate + L-aspartate = N-carbamoyl-L-aspartate + phosphate + H(+). Its pathway is pyrimidine metabolism; UMP biosynthesis via de novo pathway; (S)-dihydroorotate from bicarbonate: step 2/3. In terms of biological role, catalyzes the condensation of carbamoyl phosphate and aspartate to form carbamoyl aspartate and inorganic phosphate, the committed step in the de novo pyrimidine nucleotide biosynthesis pathway. The chain is Aspartate carbamoyltransferase catalytic subunit from Prosthecochloris aestuarii (strain DSM 271 / SK 413).